The following is a 156-amino-acid chain: Small ribosomal subunit protein uS7 (156 aa).

The protein belongs to the universal ribosomal protein uS7 family. Part of the 30S ribosomal subunit. Contacts proteins S9 and S11.

Its function is as follows. One of the primary rRNA binding proteins, it binds directly to 16S rRNA where it nucleates assembly of the head domain of the 30S subunit. Is located at the subunit interface close to the decoding center, probably blocks exit of the E-site tRNA. The polypeptide is Small ribosomal subunit protein uS7 (Mycolicibacterium vanbaalenii (strain DSM 7251 / JCM 13017 / BCRC 16820 / KCTC 9966 / NRRL B-24157 / PYR-1) (Mycobacterium vanbaalenii)).